A 125-amino-acid chain; its full sequence is MARISGIDLPSNKQLKIALTSIYGIGRTRALEVCNKSSISPSKIAKDLDNDEVNRLRKVIESDYVVEGKLRSEVAMSIKRLMDIACYRGVRHRKGLPLRGQRTKTNARTRKGKRKTVANKKIASK.

The disordered stretch occupies residues 95–125 (GLPLRGQRTKTNARTRKGKRKTVANKKIASK).

This sequence belongs to the universal ribosomal protein uS13 family. Part of the 30S ribosomal subunit. Forms a loose heterodimer with protein S19. Forms two bridges to the 50S subunit in the 70S ribosome.

Its function is as follows. Located at the top of the head of the 30S subunit, it contacts several helices of the 16S rRNA. In the 70S ribosome it contacts the 23S rRNA (bridge B1a) and protein L5 of the 50S subunit (bridge B1b), connecting the 2 subunits; these bridges are implicated in subunit movement. Contacts the tRNAs in the A and P-sites. This chain is Small ribosomal subunit protein uS13, found in Borrelia garinii subsp. bavariensis (strain ATCC BAA-2496 / DSM 23469 / PBi) (Borreliella bavariensis).